The sequence spans 160 residues: MSLATLDATQHPNLPASAATLFKAKAQNKLSFEQIAQHIGRNEVATAALFYGQAKASPEDIQKLSELLNISPQVLEEQLSGFPDRGRSVEMPPKEPLIYRLYEIVQNYGYAYKAVLNEKFGDGIMSAISFSTKVEKETDADGNNWAVITLRGKWLPFSRF.

Active-site residues include Arg-100, Glu-103, and Ser-126.

It belongs to the cyanase family.

The enzyme catalyses cyanate + hydrogencarbonate + 3 H(+) = NH4(+) + 2 CO2. Its function is as follows. Catalyzes the reaction of cyanate with bicarbonate to produce ammonia and carbon dioxide. The protein is Cyanate hydratase of Neosartorya fischeri (strain ATCC 1020 / DSM 3700 / CBS 544.65 / FGSC A1164 / JCM 1740 / NRRL 181 / WB 181) (Aspergillus fischerianus).